The primary structure comprises 100 residues: Defensin-6 (100 aa).

Residues 1-19 (MRTLTILTAVLLVALQAKA) form the signal peptide. Residues 20-68 (EPLQAEDEPLQAKAYEADAQEQRGANDQDFAVSFAEDASSSLRALGSTR) constitute a propeptide that is removed on maturation. 3 disulfides stabilise this stretch: cysteine 72–cysteine 99, cysteine 74–cysteine 88, and cysteine 78–cysteine 98.

It belongs to the alpha-defensin family. As to quaternary structure, homodimer. Self-assembles into higher-order oligomers termed nanonets, fibril-like structures that entrap microbes. Self-assembly into nanonets seems to protect against proteolytic digestion in duodenal fluid. Interacts with Y.enterocolitica invasin and S.typhimurium fliC/flagellim; the interaction creates an anchoring site for progressive DEFA6 self-assembly into nanonets. In terms of processing, proteolytically cleaved by trypsin at Arg-68; the propeptide is stored in the tissue of the small intestine and the mature peptide is found in the luminal fluid; cleavage may occur during or after release into the lumen. The N-terminal propeptide region suppresses self-assembly and renders DEFA6 propeptide unable to agglutinate bacteria and protect human epithelial cells from bacterial invasion. Post-translationally, under reducing conditions, naturally present in the gut owing to the low redox potential or enzymatically generated by the thioredoxin system, the disulfide bridges are opened leading to a conformational change of DEF6, thereby changing its antimicrobial spectrum. The reduced form exhibits inhibitory activity against anaerobic bacteria, in contrast to the minimal antimicrobial activity of the disulfide-linked oxidized form. The formation of higher-order nanonets and bacterial entrapment is independent of the redox state.

Its subcellular location is the secreted. It localises to the cytoplasmic vesicle. The protein localises to the secretory vesicle. In terms of biological role, host-defense peptide that contributes to intestinal innate immunity and mediates homeostasis at mucosal surfaces by forming higher-order oligomers that capture bacteria and prevent microbial invasion of the epithelium. After binding to bacterial surface proteins, undergoes ordered self-assembly to form fibril-like nanonets that surround and entangle bacteria and thereby prevent bacterial invasion across the epithelial barrier. Entangles and agglutinates Gram-negative bacteria, such as E.coli, S.typhimurium and Y.enterocolitica, and Gram-positive bacteria such as L.monocytogenes, thereby protecting the intestine against invasion by enteric bacterial pathogens. Blocks adhesion of C.albicans to intestinal epithelial cells and thereby suppresses fungal invasion of epithelial cells and biofilm formation. Under reducing conditions and in an acidic environment similar to the intestinal milieu, exhibits inhibitory activity against anaerobic bacteria such as B.adolescentis, L.acidophilus, and B.breve, as well as B.longum and S.thermophilus, possibly by leading to alterations in bacterial cell envelope structures. The disulfide-linked oxidized form exhibits negligible antimicrobial activity against Gram-negative and Gram-positive bacteria, as compared to the enteric defensin DEFA5. This is Defensin-6 (DEFA6) from Pan troglodytes (Chimpanzee).